We begin with the raw amino-acid sequence, 124 residues long: Large ribosomal subunit protein bL19 (124 aa).

The protein belongs to the bacterial ribosomal protein bL19 family.

Functionally, this protein is located at the 30S-50S ribosomal subunit interface and may play a role in the structure and function of the aminoacyl-tRNA binding site. The protein is Large ribosomal subunit protein bL19 of Zymomonas mobilis subsp. mobilis (strain ATCC 31821 / ZM4 / CP4).